Consider the following 321-residue polypeptide: Ubiquinone biosynthesis O-methyltransferase, mitochondrial (321 aa).

The S-adenosyl-L-methionine site is built by Arg-102, Gly-135, Asp-157, and Leu-210. Residues Glu-211, Glu-214, and His-215 each coordinate Mg(2+).

Belongs to the class I-like SAM-binding methyltransferase superfamily. UbiG/COQ3 family. In terms of assembly, component of a multi-subunit COQ enzyme complex. Requires Mg(2+) as cofactor.

It is found in the mitochondrion inner membrane. It catalyses the reaction a 3,4-dihydroxy-5-(all-trans-polyprenyl)benzoate + S-adenosyl-L-methionine = a 4-hydroxy-3-methoxy-5-(all-trans-polyprenyl)benzoate + S-adenosyl-L-homocysteine + H(+). It carries out the reaction a 3-demethylubiquinone + S-adenosyl-L-methionine = a ubiquinone + S-adenosyl-L-homocysteine. The catalysed reaction is a 3-demethylubiquinol + S-adenosyl-L-methionine = a ubiquinol + S-adenosyl-L-homocysteine + H(+). Its pathway is cofactor biosynthesis; ubiquinone biosynthesis. In terms of biological role, O-methyltransferase required for two non-consecutive steps during ubiquinone biosynthesis. Catalyzes the 2 O-methylation of 3,4-dihydroxy-5-(all-trans-polyprenyl)benzoic acid into 4-hydroxy-3-methoxy-5-(all-trans-polyprenyl)benzoic acid. Also catalyzes the last step of ubiquinone biosynthesis by mediating methylation of 3-demethylubiquinone into ubiquinone. Also able to mediate the methylation of 3-demethylubiquinol into ubiquinol. This is Ubiquinone biosynthesis O-methyltransferase, mitochondrial from Dictyostelium discoideum (Social amoeba).